The chain runs to 403 residues: DNA replication and repair protein RecF (403 aa).

30 to 37 serves as a coordination point for ATP; sequence GSNGLGKT.

The protein belongs to the RecF family.

The protein resides in the cytoplasm. The RecF protein is involved in DNA metabolism; it is required for DNA replication and normal SOS inducibility. RecF binds preferentially to single-stranded, linear DNA. It also seems to bind ATP. The chain is DNA replication and repair protein RecF from Bifidobacterium adolescentis (strain ATCC 15703 / DSM 20083 / NCTC 11814 / E194a).